The sequence spans 312 residues: MTKMKCAIIGSGNIGTDLMIKLLKGSDTLELAAVVGIDPASEGLAMARERGVATTHEGIEGLRKLPAYPEIGIAFDATSAYAHKEHDAALQADGKLVVDLTPAAIGPFFVPPVGGVLDSEIRNVNMVTCGGQATIPIVAAVSRVTPVHYAEIVASVSSRSAGPGTRANIDEFTRTTAQAIEIVGGAGRGRAIIILNPAEPPMIMRDTIFTLTDQVDEDAIRASVKEMVETVQAYVPGYRLKQEVQFERFGSNRPLKIPGYGEFVGLKTSVFLEVEGAGDYLPKYSGNLDIMTAAAKAAGERLAQQRLEKVAA.

Residue 11-14 (SGNI) participates in NAD(+) binding. Cysteine 129 acts as the Acyl-thioester intermediate in catalysis. NAD(+) is bound by residues 160–168 (SAGPGTRAN) and asparagine 287.

The protein belongs to the acetaldehyde dehydrogenase family.

It catalyses the reaction acetaldehyde + NAD(+) + CoA = acetyl-CoA + NADH + H(+). This chain is Acetaldehyde dehydrogenase (xylQ), found in Sphingobium yanoikuyae (Sphingomonas yanoikuyae).